Reading from the N-terminus, the 183-residue chain is Small ribosomal subunit protein bS16 (183 aa).

Residues 149–161 (EKKAAEAAAKAEA) show a composition bias toward basic and acidic residues. The tract at residues 149–183 (EKKAAEAAAKAEAEAANAPAEEAPAAEATEAPAEA) is disordered. Residues 162-183 (EAANAPAEEAPAAEATEAPAEA) are compositionally biased toward low complexity.

It belongs to the bacterial ribosomal protein bS16 family.

The sequence is that of Small ribosomal subunit protein bS16 from Phocaeicola vulgatus (strain ATCC 8482 / DSM 1447 / JCM 5826 / CCUG 4940 / NBRC 14291 / NCTC 11154) (Bacteroides vulgatus).